A 551-amino-acid polypeptide reads, in one-letter code: Delta-selinene synthase TPS7FN (551 aa).

Arg266, Asp303, Asp307, Arg444, and Asp447 together coordinate (2E,6E)-farnesyl diphosphate. The Mg(2+) site is built by Asp303 and Asp307. The DDXXD motif signature appears at 303 to 307 (DDIYD). Positions 447, 451, and 455 each coordinate Mg(2+).

This sequence belongs to the terpene synthase family. Tpsb subfamily. Mg(2+) is required as a cofactor. It depends on Mn(2+) as a cofactor.

The enzyme catalyses (2E,6E)-farnesyl diphosphate = delta-selinene + diphosphate. It catalyses the reaction (2E)-geranyl diphosphate = beta-myrcene + diphosphate. It carries out the reaction (2E)-geranyl diphosphate = (4S)-limonene + diphosphate. The catalysed reaction is (2E,6E)-farnesyl diphosphate + H2O = selina-6-en-4-ol + diphosphate. It functions in the pathway secondary metabolite biosynthesis; terpenoid biosynthesis. Involved in sesquiterpene olefins biosynthesis, constituants of cannabinoids and terpenoids-rich resins. Catalyzes mainly the conversion of (2E)-farnesyl diphosphate to delta-selinene, and also produces minor products such as selina-6-en-4-ol. Can also use (2E)-geranyl diphosphate as substrate with low efficiency, producing minor amounts of myrcene and limonene. This is Delta-selinene synthase TPS7FN from Cannabis sativa (Hemp).